The sequence spans 758 residues: Ferrichrome receptor FcuA (758 aa).

An N-terminal signal peptide occupies residues 1–36 (MNQTISSRAPQKRLAPRLLCVMIGAALGTLSASSWA). Residues 66-73 (DTITVVGA) carry the TonB box motif. Positions 106–216 (DARNVPFNVI…VGGMINLEPK (111 aa)) constitute a TBDR plug domain. Positions 221 to 758 (TPLTRVTVDY…ALKLSVSMDF (538 aa)) constitute a TBDR beta-barrel domain. The short motif at 741 to 758 (YIYQGDPRALKLSVSMDF) is the TonB C-terminal box element.

It belongs to the TonB-dependent receptor family.

The protein localises to the cell outer membrane. In terms of biological role, receptor for the hydroxamate siderophore, ferrichrome. Binds also to most other ferrichrome derivatives except enantio ferrichrome and ferric rhodotorulate. The sequence is that of Ferrichrome receptor FcuA (fcuA) from Yersinia enterocolitica.